The chain runs to 447 residues: Ribulose bisphosphate carboxylase large chain (447 aa).

Lysine 5 carries the post-translational modification N6,N6,N6-trimethyllysine. Positions 114 and 164 each coordinate substrate. Lysine 166 (proton acceptor) is an active-site residue. Lysine 168 serves as a coordination point for substrate. Residues lysine 192, aspartate 194, and glutamate 195 each contribute to the Mg(2+) site. An N6-carboxylysine modification is found at lysine 192. Histidine 285 acts as the Proton acceptor in catalysis. Positions 286, 318, and 370 each coordinate substrate.

The protein belongs to the RuBisCO large chain family. Type I subfamily. Heterohexadecamer of 8 large chains and 8 small chains; disulfide-linked. The disulfide link is formed within the large subunit homodimers. It depends on Mg(2+) as a cofactor. In terms of processing, the disulfide bond which can form in the large chain dimeric partners within the hexadecamer appears to be associated with oxidative stress and protein turnover.

It is found in the plastid. The protein resides in the chloroplast. It carries out the reaction 2 (2R)-3-phosphoglycerate + 2 H(+) = D-ribulose 1,5-bisphosphate + CO2 + H2O. It catalyses the reaction D-ribulose 1,5-bisphosphate + O2 = 2-phosphoglycolate + (2R)-3-phosphoglycerate + 2 H(+). Its function is as follows. RuBisCO catalyzes two reactions: the carboxylation of D-ribulose 1,5-bisphosphate, the primary event in carbon dioxide fixation, as well as the oxidative fragmentation of the pentose substrate in the photorespiration process. Both reactions occur simultaneously and in competition at the same active site. This is Ribulose bisphosphate carboxylase large chain from Camassia leichtlinii (Western quamash).